Here is a 138-residue protein sequence, read N- to C-terminus: Large ribosomal subunit protein uL16 (138 aa).

Basic residues predominate over residues 1–19 (MLIPRKVAHRKQHHPKRTG). The disordered stretch occupies residues 1–22 (MLIPRKVAHRKQHHPKRTGAAK).

Belongs to the universal ribosomal protein uL16 family. As to quaternary structure, part of the 50S ribosomal subunit.

Functionally, binds 23S rRNA and is also seen to make contacts with the A and possibly P site tRNAs. The chain is Large ribosomal subunit protein uL16 from Parafrankia sp. (strain EAN1pec).